Here is a 219-residue protein sequence, read N- to C-terminus: MDPEKFYSDAIDYWNGVQPTVDGMLGGLGTGRIPQTDVVGSRTFLNRLNYRIGKIENLVAADCGAGIGRVTENVLLKIASHVDLVEPVENFISTAKKQLATKPCSFINVGLQNWTPEKNRYGLIWNQWCLSHLTDEDLIAYLSRCCEAIQEKGVICVKENVSSFEDTFDPIDSSVTRCEQSLKSLFKKANLVVVAETLQHGFPEELFPVKMYALVPHSS.

S-adenosyl-L-methionine-binding positions include Gly-64, Arg-69, 111-112, and Gln-127; that span reads LQ.

The protein belongs to the methyltransferase superfamily. NTM1 family.

It localises to the cytoplasm. The enzyme catalyses N-terminal L-alanyl-L-prolyl-L-lysyl-[protein] + 3 S-adenosyl-L-methionine = N-terminal N,N,N-trimethyl-L-alanyl-L-prolyl-L-lysyl-[protein] + 3 S-adenosyl-L-homocysteine + 3 H(+). It carries out the reaction N-terminal L-seryl-L-prolyl-L-lysyl-[protein] + 3 S-adenosyl-L-methionine = N-terminal N,N,N-trimethyl-L-seryl-L-prolyl-L-lysyl-[protein] + 3 S-adenosyl-L-homocysteine + 3 H(+). The catalysed reaction is N-terminal L-prolyl-L-prolyl-L-lysyl-[protein] + 2 S-adenosyl-L-methionine = N-terminal N,N-dimethyl-L-prolyl-L-prolyl-L-lysyl-[protein] + 2 S-adenosyl-L-homocysteine + 2 H(+). In terms of biological role, alpha-N-methyltransferase that methylates the N-terminus of target proteins containing the N-terminal motif [Ala/Pro/Ser]-Pro-Lys when the initiator Met is cleaved. Specifically catalyzes mono-, di- or tri-methylation of exposed alpha-amino group of Ala or Ser residue in the [Ala/Ser]-Pro-Lys motif and mono- or di-methylation of Pro in the Pro-Pro-Lys motif. This chain is Alpha N-terminal protein methyltransferase 1 (tae1), found in Schizosaccharomyces pombe (strain 972 / ATCC 24843) (Fission yeast).